Here is a 535-residue protein sequence, read N- to C-terminus: uncharacterized protein (535 aa).

6 helical membrane passes run 55-75, 82-102, 115-135, 143-163, 201-221, and 346-366; these read LITI…IPII, FMPV…IMFV, IICF…ILRH, AFVL…LMLF, STIL…TLIM, and VSGP…NVFA.

It is found in the membrane. This is an uncharacterized protein from Schizosaccharomyces pombe (strain 972 / ATCC 24843) (Fission yeast).